A 159-amino-acid polypeptide reads, in one-letter code: MHRSHPSISRRKHLMKEMMEDDYALPTETQQIARVISSRGNNLHEVETVDETFLVSMPNKFRKSMWVKRGDFLLVEPIEEGDKVKAEICKILTPEHIKEYTKAAIWPDKFTKKPVQEEATSQNKDDSDFEDDLLPNTNRPVNRDSSDEEEDEETSSEED.

In terms of domain architecture, S1-like spans 18–93 (MMEDDYALPT…VKAEICKILT (76 aa)). The interval 109-159 (KFTKKPVQEEATSQNKDDSDFEDDLLPNTNRPVNRDSSDEEEDEETSSEED) is disordered. Acidic residues predominate over residues 146–159 (SDEEEDEETSSEED).

It belongs to the EIF1AD family.

This Drosophila melanogaster (Fruit fly) protein is Probable RNA-binding protein EIF1AD.